A 311-amino-acid polypeptide reads, in one-letter code: Aspartate carbamoyltransferase catalytic subunit (311 aa).

Carbamoyl phosphate is bound by residues Arg55 and Thr56. L-aspartate is bound at residue Lys85. Carbamoyl phosphate is bound by residues Arg106, His135, and Gln138. Positions 168 and 230 each coordinate L-aspartate. 2 residues coordinate carbamoyl phosphate: Leu268 and Pro269.

It belongs to the aspartate/ornithine carbamoyltransferase superfamily. ATCase family. Heterododecamer (2C3:3R2) of six catalytic PyrB chains organized as two trimers (C3), and six regulatory PyrI chains organized as three dimers (R2).

The enzyme catalyses carbamoyl phosphate + L-aspartate = N-carbamoyl-L-aspartate + phosphate + H(+). Its pathway is pyrimidine metabolism; UMP biosynthesis via de novo pathway; (S)-dihydroorotate from bicarbonate: step 2/3. Functionally, catalyzes the condensation of carbamoyl phosphate and aspartate to form carbamoyl aspartate and inorganic phosphate, the committed step in the de novo pyrimidine nucleotide biosynthesis pathway. This chain is Aspartate carbamoyltransferase catalytic subunit, found in Pectobacterium carotovorum subsp. carotovorum (strain PC1).